The sequence spans 278 residues: Tryptophan synthase alpha chain (278 aa).

Active-site proton acceptor residues include glutamate 50 and aspartate 61.

Belongs to the TrpA family. Tetramer of two alpha and two beta chains.

The enzyme catalyses (1S,2R)-1-C-(indol-3-yl)glycerol 3-phosphate + L-serine = D-glyceraldehyde 3-phosphate + L-tryptophan + H2O. Its pathway is amino-acid biosynthesis; L-tryptophan biosynthesis; L-tryptophan from chorismate: step 5/5. Functionally, the alpha subunit is responsible for the aldol cleavage of indoleglycerol phosphate to indole and glyceraldehyde 3-phosphate. The chain is Tryptophan synthase alpha chain from Nitrobacter hamburgensis (strain DSM 10229 / NCIMB 13809 / X14).